The chain runs to 76 residues: Conotoxin MaIr332 (76 aa).

The signal sequence occupies residues 1 to 21 (MKLTCVIVAVLFLTAWTFVTA). Positions 22 to 48 (DDSGNGLENLFSKAHHEMKNPKDSKLN) are excised as a propeptide. 3 disulfide bridges follow: Cys51–Cys66, Cys58–Cys70, and Cys65–Cys75.

Belongs to the conotoxin O1 superfamily. Expressed by the venom duct.

Its subcellular location is the secreted. The chain is Conotoxin MaIr332 from Conus marmoreus (Marble cone).